The primary structure comprises 428 residues: GTPase HflX (428 aa).

The Hflx-type G domain maps to 214-374 (PVVAIVGYTN…AIERELFKET (161 aa)). Residues 220 to 227 (GYTNAGKS), 245 to 249 (FATLD), 267 to 270 (DTVG), 333 to 336 (NKID), and 352 to 354 (SAK) contribute to the GTP site. 2 residues coordinate Mg(2+): Ser227 and Thr247.

This sequence belongs to the TRAFAC class OBG-HflX-like GTPase superfamily. HflX GTPase family. Monomer. Associates with the 50S ribosomal subunit. Requires Mg(2+) as cofactor.

The protein resides in the cytoplasm. GTPase that associates with the 50S ribosomal subunit and may have a role during protein synthesis or ribosome biogenesis. This Caldanaerobacter subterraneus subsp. tengcongensis (strain DSM 15242 / JCM 11007 / NBRC 100824 / MB4) (Thermoanaerobacter tengcongensis) protein is GTPase HflX.